The chain runs to 1449 residues: uncharacterized protein (1449 aa).

A compositionally biased stretch (basic and acidic residues) spans 1-13; it reads MELRSDASHKENV. Disordered regions lie at residues 1-32, 123-201, 258-298, 315-437, 523-551, 1257-1278, and 1399-1449; these read MELR…RRSL, SNLS…LRSW, APQE…RRRR, LSDS…NKAQ, KQVQ…LGRS, DQGP…SKAH, and RLAA…QLQL. Positions 123 to 133 are enriched in polar residues; that stretch reads SNLSINETSSP. Polar residues-rich tracts occupy residues 315 to 333 and 384 to 394; these read LSDS…TLGT and PCSSAFSNTAW. A compositionally biased stretch (basic and acidic residues) spans 400-419; the sequence is QKGEEGAPRERVHREEERTA. The span at 426 to 437 shows a compositional bias: polar residues; sequence VPASSASKNKAQ. Residues 1258–1270 are compositionally biased toward basic and acidic residues; it reads QGPRAHSSPEPRA.

This is an uncharacterized protein from Homo sapiens (Human).